A 232-amino-acid chain; its full sequence is Large ribosomal subunit protein uL1 (232 aa).

The protein belongs to the universal ribosomal protein uL1 family. As to quaternary structure, part of the 50S ribosomal subunit.

Functionally, binds directly to 23S rRNA. The L1 stalk is quite mobile in the ribosome, and is involved in E site tRNA release. Its function is as follows. Protein L1 is also a translational repressor protein, it controls the translation of the L11 operon by binding to its mRNA. In Xanthomonas oryzae pv. oryzae (strain MAFF 311018), this protein is Large ribosomal subunit protein uL1.